Reading from the N-terminus, the 492-residue chain is Malonyl-CoA decarboxylase, mitochondrial (492 aa).

The interval 1 to 28 is disordered; sequence MRGLGPGLRARRLLPLRSPPRPPGPRGR. The N-terminal 38 residues, 1-38, are a transit peptide targeting the mitochondrion; sequence MRGLGPGLRARRLLPLRSPPRPPGPRGRRLCGGLAASA. Residues 39–189 are alpha-helical domain; that stretch reads MDELLRRAVP…VLKSMLSEWF (151 aa). Position 58 is an N6-acetyllysine (Lys58). An N6-acetyllysine; alternate modification is found at Lys167. Lys167 carries the N6-succinyllysine; alternate modification. Residues 190–492 are catalytic domain; the sequence is SSGFLNLERV…VAQFQNNSKL (303 aa). Lys210 carries the post-translational modification N6-acetyllysine. Position 221 is an N6-succinyllysine (Lys221). Malonyl-CoA is bound at residue 298–304; the sequence is QGVELGT. Lys316 is subject to N6-acetyllysine. Position 328 (Ser328) interacts with malonyl-CoA. Catalysis depends on Ser328, which acts as the Proton acceptor. Position 385 is an N6-acetyllysine; alternate (Lys385). An N6-succinyllysine; alternate modification is found at Lys385. Position 388 is an N6-acetyllysine (Lys388). His422 contacts malonyl-CoA. Catalysis depends on His422, which acts as the Proton donor. Residues Lys441 and Lys471 each carry the N6-acetyllysine modification. The Microbody targeting signal signature appears at 490–492; sequence SKL.

In terms of assembly, homotetramer. Dimer of dimers. The two subunits within a dimer display conformational differences suggesting that at any given moment, only one of the two subunits is competent for malonyl-CoA binding and catalytic activity. Under oxidizing conditions, can form disulfide-linked homotetramers (in vitro). Associates with the peroxisomal targeting signal receptor PEX5. Interchain disulfide bonds may form in peroxisomes (Potential). Interchain disulfide bonds are not expected to form in the reducing environment of the cytoplasm and mitochondria. Post-translationally, acetylation at Lys-471 activates malonyl-CoA decarboxylase activity. Deacetylation at Lys-471 by SIRT4 represses activity, leading to promote lipogenesis.

It is found in the cytoplasm. Its subcellular location is the mitochondrion matrix. The protein resides in the peroxisome. It localises to the peroxisome matrix. The catalysed reaction is malonyl-CoA + H(+) = acetyl-CoA + CO2. The protein operates within metabolic intermediate biosynthesis; acetyl-CoA biosynthesis; acetyl-CoA from malonyl-CoA: step 1/1. Malonyl-CoA decarboxylase activity does not require any cofactors or divalent metal ions. Its function is as follows. Catalyzes the conversion of malonyl-CoA to acetyl-CoA. In the fatty acid biosynthesis MCD selectively removes malonyl-CoA and thus assures that methyl-malonyl-CoA is the only chain elongating substrate for fatty acid synthase and that fatty acids with multiple methyl side chains are produced. In peroxisomes it may be involved in degrading intraperoxisomal malonyl-CoA, which is generated by the peroxisomal beta-oxidation of odd chain-length dicarboxylic fatty acids. Plays a role in the metabolic balance between glucose and lipid oxidation in muscle independent of alterations in insulin signaling. Plays a role in controlling the extent of ischemic injury by promoting glucose oxidation. The chain is Malonyl-CoA decarboxylase, mitochondrial from Mus musculus (Mouse).